Here is a 574-residue protein sequence, read N- to C-terminus: Interleukin-22 receptor subunit alpha-1 (574 aa).

The signal sequence occupies residues 1-15 (MRTLLTILTVGSLAA). Topologically, residues 16 to 228 (HAPEDPSDLL…VKTLPDRTWT (213 aa)) are extracellular. 2 consecutive Fibronectin type-III domains span residues 17–124 (APED…LKPP) and 141–221 (PTPT…RVKT). An intrachain disulfide couples Cys-71 to Cys-79. 2 N-linked (GlcNAc...) asparagine glycosylation sites follow: Asn-80 and Asn-172. A disulfide bridge connects residues Cys-128 and Cys-217. Residues 229–249 (YSFSGAFLFSMGFLVAVLCYL) traverse the membrane as a helical segment. Residues 250–574 (SYRYVTKPPA…GLALTVQWES (325 aa)) are Cytoplasmic-facing. 3 disordered regions span residues 388-440 (SSYA…AGSC), 454-489 (AMEE…EGTP), and 507-560 (HPMS…TELD). A phosphoserine mark is found at Ser-410 and Ser-414.

It belongs to the type II cytokine receptor family. As to quaternary structure, heterodimer with IL10RB and with IL20RB. IL22 binding to heterodimer is greater than binding to IL22RA1 alone. Interacts with FBXW12; the interaction promotes ubiquitination of IL22RA1. In terms of processing, ubiquitinated. As to expression, expressed in colon, liver, lung, pancreas and kidney. No expression in immune cells such as monocytes, T-cells, and NK-cells. Expressed in keratinocytes of normal skin as well as in psoriatic skin lesion. Detected in normal blood brain barrier endothelial cells as well as in multiple sclerosis lesions; Strongly expressed on central nervous system vessels within infiltrated multiple sclerosis lesions. Overexpressed in synovial fluid cells from rheumatoid arthritis and spondyloarthropathy patients.

The protein resides in the cell membrane. In terms of biological role, component of the receptor for IL20, IL22 and IL24. Component of IL22 receptor formed by IL22RA1 and IL10RB enabling IL22 signaling via JAK/STAT pathways. IL22 also induces activation of MAPK1/MAPK3 and Akt kinases pathways. Component of one of the receptor for IL20 and IL24 formed by IL22RA1 and IL20RB also signaling through STATs activation. Mediates IL24 antiangiogenic activity as well as IL24 inhibitory effect on endothelial cell tube formation and differentiation. In Homo sapiens (Human), this protein is Interleukin-22 receptor subunit alpha-1 (IL22RA1).